Consider the following 99-residue polypeptide: Protein translation factor SUI1 homolog (99 aa).

The protein belongs to the SUI1 family.

The polypeptide is Protein translation factor SUI1 homolog (Picrophilus torridus (strain ATCC 700027 / DSM 9790 / JCM 10055 / NBRC 100828 / KAW 2/3)).